The following is a 295-amino-acid chain: Ethanolamine ammonia-lyase small subunit (295 aa).

Adenosylcob(III)alamin is bound by residues valine 208 and glutamate 229.

Belongs to the EutC family. The basic unit is a heterodimer which dimerizes to form tetramers. The heterotetramers trimerize; 6 large subunits form a core ring with 6 small subunits projecting outwards. Requires adenosylcob(III)alamin as cofactor.

The protein resides in the bacterial microcompartment. It carries out the reaction ethanolamine = acetaldehyde + NH4(+). Its pathway is amine and polyamine degradation; ethanolamine degradation. Functionally, catalyzes the deamination of various vicinal amino-alcohols to oxo compounds. Allows this organism to utilize ethanolamine as the sole source of nitrogen and carbon in the presence of external vitamin B12. This chain is Ethanolamine ammonia-lyase small subunit, found in Fusobacterium nucleatum subsp. nucleatum (strain ATCC 25586 / DSM 15643 / BCRC 10681 / CIP 101130 / JCM 8532 / KCTC 2640 / LMG 13131 / VPI 4355).